The primary structure comprises 606 residues: 4-hydroxy-3-methylbut-2-en-1-yl diphosphate synthase (flavodoxin) (606 aa).

Residues cysteine 513, cysteine 516, cysteine 547, and glutamate 554 each contribute to the [4Fe-4S] cluster site.

The protein belongs to the IspG family. [4Fe-4S] cluster serves as cofactor.

It catalyses the reaction (2E)-4-hydroxy-3-methylbut-2-enyl diphosphate + oxidized [flavodoxin] + H2O + 2 H(+) = 2-C-methyl-D-erythritol 2,4-cyclic diphosphate + reduced [flavodoxin]. Its pathway is isoprenoid biosynthesis; isopentenyl diphosphate biosynthesis via DXP pathway; isopentenyl diphosphate from 1-deoxy-D-xylulose 5-phosphate: step 5/6. Functionally, converts 2C-methyl-D-erythritol 2,4-cyclodiphosphate (ME-2,4cPP) into 1-hydroxy-2-methyl-2-(E)-butenyl 4-diphosphate. In Chlamydia abortus (strain DSM 27085 / S26/3) (Chlamydophila abortus), this protein is 4-hydroxy-3-methylbut-2-en-1-yl diphosphate synthase (flavodoxin).